The following is a 65-amino-acid chain: Large ribosomal subunit protein bL35 (65 aa).

Residues 1-22 are disordered; sequence MPKIKTVRGAAKRFKKTGSGGF. Positions 10–22 are enriched in basic residues; it reads AAKRFKKTGSGGF.

It belongs to the bacterial ribosomal protein bL35 family.

In Serratia proteamaculans (strain 568), this protein is Large ribosomal subunit protein bL35.